Reading from the N-terminus, the 354-residue chain is Protein-arginine kinase (354 aa).

Residues 24–254 enclose the Phosphagen kinase C-terminal domain; the sequence is IVLSSRIRLA…QQIIQQEKMA (231 aa). Residues 27 to 31, histidine 92, arginine 125, 176 to 180, and 207 to 212 each bind ATP; these read SSRIR, RASVM, and RGIYGE. The RDXXRA motif of the pArg binding pocket involved in allosteric regulation signature appears at 337–342; that stretch reads RDYRRA.

Belongs to the ATP:guanido phosphotransferase family.

It catalyses the reaction L-arginyl-[protein] + ATP = N(omega)-phospho-L-arginyl-[protein] + ADP + H(+). Its activity is regulated as follows. Appears to be allosterically activated by the binding of pArg-containing polypeptides to the pArg-binding pocket localized in the C-terminal domain of McsB. Functionally, catalyzes the specific phosphorylation of arginine residues in a large number of proteins. Is part of the bacterial stress response system. Protein arginine phosphorylation has a physiologically important role and is involved in the regulation of many critical cellular processes, such as protein homeostasis, motility, competence, and stringent and stress responses, by regulating gene expression and protein activity. This chain is Protein-arginine kinase, found in Bacillus cereus (strain AH187).